The chain runs to 676 residues: Beta-galactosidase BgaP (676 aa).

A substrate-binding site is contributed by Arg112. Cys116 provides a ligand contact to Zn(2+). Asn150 is a substrate binding site. Catalysis depends on Glu151, which acts as the Proton donor. Zn(2+)-binding residues include Cys156, Cys158, and Cys161. Catalysis depends on Glu308, which acts as the Nucleophile. Residues Trp316 and 356 to 359 each bind substrate; that span reads EKYH.

Belongs to the glycosyl hydrolase 42 family. As to quaternary structure, homodimer.

It carries out the reaction Hydrolysis of terminal non-reducing beta-D-galactose residues in beta-D-galactosides.. Its activity is regulated as follows. No activity lost during treatment with 100 mM EDTA after 2 hours, and the addition of 1 mM MgCl(2), 1 mM CaCl(2) or 1 mM MnCl(2) has no effect. However, the enzyme activity is inhibited by Zn(2+), Cu(2+), Ni(2+) and Co(2+) to different extents. Addition of Na(+) or K(+) slightly stimulates the enzyme activity at low concentrations and the optimal concentration is 250 mM. A further increase of their concentration of ions above the optimum value results in a decrease in enzyme activity. The enzyme is still active even in the presence of Na(+) or K(+) at a concentration up to 5 M. In terms of biological role, hydrolyzes lactose, o-nitrophenyl-beta-D-galactopyranoside (ONPG), p-nitrophenyl-beta-D-galactopyranoside (PNPG), 5-bromo-4-chloro-3-indolyl-beta-D-galactopyranoside (X-gal), o-nitrophenyl-beta-D-fucopyranoside, p-nitrophenyl-beta-D-mannoside, o-nitrophenyl-beta-D-glucoside, p-nitrophenyl-beta-D-xyloside, p-nitrophenyl-beta-D-cellobioside, p-nitrophenyl-beta-D-arabinoside, p-nitrophenyl-beta-D-lactoside, p-nitrophenyl-beta-D-galacturonide, p-nitrophenyl-beta-D-glucuronide and p-nitrophenyl-alpha-D-galactoside with highest level of activity with ONPG as substrate, intermediate level of activity with PNPG and lower levels of activity with all other chromogenic nitrophenyl analogs. Able to hydrolyze 34% of milk lactose after 60 minutes at 5 degrees Celsius. This Planococcus sp. (strain L4) protein is Beta-galactosidase BgaP.